Reading from the N-terminus, the 264-residue chain is Small ribosomal subunit protein uS2 (264 aa).

A compositionally biased stretch (acidic residues) spans 243 to 253; it reads IEAAEDGEEVD. The segment at 243–264 is disordered; that stretch reads IEAAEDGEEVDNAQLTSSQGRS. The span at 255 to 264 shows a compositional bias: polar residues; it reads AQLTSSQGRS.

This sequence belongs to the universal ribosomal protein uS2 family.

The polypeptide is Small ribosomal subunit protein uS2 (Deinococcus geothermalis (strain DSM 11300 / CIP 105573 / AG-3a)).